We begin with the raw amino-acid sequence, 438 residues long: EF-hand calcium-binding domain-containing protein 3 (438 aa).

EF-hand domains are found at residues 47–82 (SQMRAFQDAYNFFNKDKTGCIDLHGMMCTLAKLGMN) and 83–118 (LTKHDVHNELRCADIDQDGKVNFSDFLKVLTDKNRF). Aspartate 96, aspartate 98, aspartate 100, lysine 102, and aspartate 107 together coordinate Ca(2+). Position 279 is a phosphotyrosine (tyrosine 279). A disordered region spans residues 413–438 (SSSDISECDTDTGRKRKRKGFKGFRQ). The span at 426–438 (RKRKRKGFKGFRQ) shows a compositional bias: basic residues.

This Bos taurus (Bovine) protein is EF-hand calcium-binding domain-containing protein 3 (EFCAB3).